The primary structure comprises 485 residues: MEKTEEPPSSNNEEDSPAKEKIWCLQRVGRDSDWLRLFEDSEVSVGRGLNVTHQILSSSCPLMISRIHCVFKLNEGRQWTVTDNKSLNGVWVNGKRIPPSTPCILHQSDSVRLGVPLDGNPVEFDYILVQKNFDDVKSFLSGNLGKDSGAASLSQKLKNSKRKFDGGDESEPCPTQHSKSKLYRSSAPDKSRAQPCPSGERRETLKLSSRPLEEDRDKAGSSSSTCSDSSQHLATLHRYNRSLMVLKGRVGDTQKRAAELEQQQTQTPEREKEMQDLQTQLEALRGQLRSQQEQALRRMETLEKSFCEEERRLETEKAQQNEVGLKKQLEEALKEHRKVIEELKHAWQGFKEVLQAKDKELEVTKEEKEKAKAQKEEVVTQMTEVLESELQCSICSELFIEAVTLNCAHSFCQHCISEWRNRKDKCPMCWQNITSQTRSLVLDNCIDRMVENLSADMRERRLVLINERKGERSKSESISSSGGNK.

An FHA domain is found at 43 to 97 (VSVGRGLNVTHQILSSSCPLMISRIHCVFKLNEGRQWTVTDNKSLNGVWVNGKRI). The disordered stretch occupies residues 150–232 (AASLSQKLKN…SSTCSDSSQH (83 aa)). The segment covering 199–219 (GERRETLKLSSRPLEEDRDKA) has biased composition (basic and acidic residues). Residues 221–230 (SSSSTCSDSS) show a composition bias toward low complexity. The RING-type zinc finger occupies 392-430 (CSICSELFIEAVTLNCAHSFCQHCISEWRNRKDKCPMCW).

The protein belongs to the RNF8 family. Homodimer. Forms a E2-E3 ubiquitin ligase complex composed of the rnf8 homodimer and a E2 heterodimer of ube2n and ube2v2.

The protein resides in the nucleus. The enzyme catalyses S-ubiquitinyl-[E2 ubiquitin-conjugating enzyme]-L-cysteine + [acceptor protein]-L-lysine = [E2 ubiquitin-conjugating enzyme]-L-cysteine + N(6)-ubiquitinyl-[acceptor protein]-L-lysine.. Its pathway is protein modification; protein ubiquitination. Functionally, E3 ubiquitin-protein ligase that plays a key role in DNA damage signaling via 2 distinct roles: by mediating the 'Lys-63'-linked ubiquitination of histones H2A and H2AX and promoting the recruitment of DNA repair proteins at double-strand breaks (DSBs) sites, and by catalyzing 'Lys-48'-linked ubiquitination to remove target proteins from DNA damage sites. Following DNA DSBs, it is recruited to the sites of damage by ATM-phosphorylated mdc1 and catalyzes the 'Lys-63'-linked ubiquitination of histones H2A and H2AX. H2A ubiquitination also mediates the ATM-dependent transcriptional silencing at regions flanking DSBs in cis, a mechanism to avoid collision between transcription and repair intermediates. Also catalyzes the formation of 'Lys-48'-linked polyubiquitin chains, leading to degradation of substrate proteins. In addition to its function in damage signaling, also plays a role in higher-order chromatin structure by mediating extensive chromatin decondensation. In Danio rerio (Zebrafish), this protein is E3 ubiquitin-protein ligase rnf8.